Reading from the N-terminus, the 182-residue chain is Ribosome maturation factor RimM (182 aa).

Residues 103 to 182 (GDDYYWKDLM…VIEADWDPGF (80 aa)) enclose the PRC barrel domain.

Belongs to the RimM family. As to quaternary structure, binds ribosomal protein uS19.

Its subcellular location is the cytoplasm. Its function is as follows. An accessory protein needed during the final step in the assembly of 30S ribosomal subunit, possibly for assembly of the head region. Essential for efficient processing of 16S rRNA. May be needed both before and after RbfA during the maturation of 16S rRNA. It has affinity for free ribosomal 30S subunits but not for 70S ribosomes. This is Ribosome maturation factor RimM from Serratia proteamaculans (strain 568).